The primary structure comprises 254 residues: 3-deoxy-manno-octulosonate cytidylyltransferase (254 aa).

The protein belongs to the KdsB family.

It is found in the cytoplasm. It carries out the reaction 3-deoxy-alpha-D-manno-oct-2-ulosonate + CTP = CMP-3-deoxy-beta-D-manno-octulosonate + diphosphate. It participates in nucleotide-sugar biosynthesis; CMP-3-deoxy-D-manno-octulosonate biosynthesis; CMP-3-deoxy-D-manno-octulosonate from 3-deoxy-D-manno-octulosonate and CTP: step 1/1. It functions in the pathway bacterial outer membrane biogenesis; lipopolysaccharide biosynthesis. In terms of biological role, activates KDO (a required 8-carbon sugar) for incorporation into bacterial lipopolysaccharide in Gram-negative bacteria. The chain is 3-deoxy-manno-octulosonate cytidylyltransferase from Chlamydia trachomatis serovar A (strain ATCC VR-571B / DSM 19440 / HAR-13).